The following is a 410-amino-acid chain: Translation initiation factor 2 subunit gamma (410 aa).

A tr-type G domain is found at 6–203 (QSEVNIGMVG…AIQEFIPTPE (198 aa)). The G1 stretch occupies residues 15–22 (GHVDHGKT). Positions 18, 22, 43, and 45 each coordinate Mg(2+). A GTP-binding site is contributed by 18–23 (DHGKTS). Residues 43-47 (GISIR) form a G2 region. Zn(2+) contacts are provided by Cys58, Cys61, Cys73, and Cys76. The G3 stretch occupies residues 90–93 (DAPG). Residues 146-149 (NKID) and 181-183 (SAH) each bind GTP. The segment at 146–149 (NKID) is G4. The interval 181–183 (SAH) is G5.

This sequence belongs to the TRAFAC class translation factor GTPase superfamily. Classic translation factor GTPase family. EIF2G subfamily. In terms of assembly, heterotrimer composed of an alpha, a beta and a gamma chain. Requires Mg(2+) as cofactor.

The catalysed reaction is GTP + H2O = GDP + phosphate + H(+). Functionally, eIF-2 functions in the early steps of protein synthesis by forming a ternary complex with GTP and initiator tRNA. This chain is Translation initiation factor 2 subunit gamma, found in Methanococcus maripaludis (strain C7 / ATCC BAA-1331).